A 372-amino-acid polypeptide reads, in one-letter code: Cobalt-precorrin-5B C(1)-methyltransferase (372 aa).

The protein belongs to the CbiD family.

It catalyses the reaction Co-precorrin-5B + S-adenosyl-L-methionine = Co-precorrin-6A + S-adenosyl-L-homocysteine. The protein operates within cofactor biosynthesis; adenosylcobalamin biosynthesis; cob(II)yrinate a,c-diamide from sirohydrochlorin (anaerobic route): step 6/10. Catalyzes the methylation of C-1 in cobalt-precorrin-5B to form cobalt-precorrin-6A. This Geobacillus kaustophilus (strain HTA426) protein is Cobalt-precorrin-5B C(1)-methyltransferase.